The following is a 179-amino-acid chain: Large ribosomal subunit protein uL5 (179 aa).

Belongs to the universal ribosomal protein uL5 family. As to quaternary structure, part of the 50S ribosomal subunit; part of the 5S rRNA/L5/L18/L25 subcomplex. Contacts the 5S rRNA and the P site tRNA. Forms a bridge to the 30S subunit in the 70S ribosome.

In terms of biological role, this is one of the proteins that bind and probably mediate the attachment of the 5S RNA into the large ribosomal subunit, where it forms part of the central protuberance. In the 70S ribosome it contacts protein S13 of the 30S subunit (bridge B1b), connecting the 2 subunits; this bridge is implicated in subunit movement. Contacts the P site tRNA; the 5S rRNA and some of its associated proteins might help stabilize positioning of ribosome-bound tRNAs. This chain is Large ribosomal subunit protein uL5, found in Salmonella agona (strain SL483).